We begin with the raw amino-acid sequence, 346 residues long: Aspartate-semialdehyde dehydrogenase (346 aa).

NADP(+)-binding positions include 13–16 (TGAV) and 41–42 (RS). Ser98 is modified (phosphoserine). Residue Arg101 participates in phosphate binding. Catalysis depends on Cys130, which acts as the Acyl-thioester intermediate. The residue at position 146 (Tyr146) is a Phosphotyrosine. Gln157 provides a ligand contact to substrate. 160–161 (SG) contacts NADP(+). Lys221 contacts phosphate. Arg243 is a binding site for substrate. His250 acts as the Proton acceptor in catalysis. NADP(+) is bound at residue Asn324.

It belongs to the aspartate-semialdehyde dehydrogenase family. As to quaternary structure, homodimer.

The catalysed reaction is L-aspartate 4-semialdehyde + phosphate + NADP(+) = 4-phospho-L-aspartate + NADPH + H(+). It functions in the pathway amino-acid biosynthesis; L-lysine biosynthesis via DAP pathway; (S)-tetrahydrodipicolinate from L-aspartate: step 2/4. Its pathway is amino-acid biosynthesis; L-methionine biosynthesis via de novo pathway; L-homoserine from L-aspartate: step 2/3. It participates in amino-acid biosynthesis; L-threonine biosynthesis; L-threonine from L-aspartate: step 2/5. Its function is as follows. Catalyzes the NADPH-dependent formation of L-aspartate-semialdehyde (L-ASA) by the reductive dephosphorylation of L-aspartyl-4-phosphate. This chain is Aspartate-semialdehyde dehydrogenase, found in Bacillus subtilis (strain 168).